The following is a 182-amino-acid chain: Ribosome-recycling factor (182 aa).

Belongs to the RRF family.

It is found in the cytoplasm. Responsible for the release of ribosomes from messenger RNA at the termination of protein biosynthesis. May increase the efficiency of translation by recycling ribosomes from one round of translation to another. The polypeptide is Ribosome-recycling factor (Prochlorococcus marinus (strain MIT 9515)).